We begin with the raw amino-acid sequence, 187 residues long: Large ribosomal subunit protein uL5 (187 aa).

This sequence belongs to the universal ribosomal protein uL5 family. Part of the 50S ribosomal subunit; part of the 5S rRNA/L5/L18/L25 subcomplex. Contacts the 5S rRNA and the P site tRNA. Forms a bridge to the 30S subunit in the 70S ribosome.

In terms of biological role, this is one of the proteins that bind and probably mediate the attachment of the 5S RNA into the large ribosomal subunit, where it forms part of the central protuberance. In the 70S ribosome it contacts protein S13 of the 30S subunit (bridge B1b), connecting the 2 subunits; this bridge is implicated in subunit movement. Contacts the P site tRNA; the 5S rRNA and some of its associated proteins might help stabilize positioning of ribosome-bound tRNAs. In Corynebacterium diphtheriae (strain ATCC 700971 / NCTC 13129 / Biotype gravis), this protein is Large ribosomal subunit protein uL5.